Reading from the N-terminus, the 351-residue chain is DNA polymerase IV (351 aa).

The UmuC domain occupies 4–185; that stretch reads IIHVDMDCFF…LPLAKIPGVG (182 aa). Mg(2+)-binding residues include aspartate 8 and aspartate 103. Glutamate 104 is an active-site residue.

Belongs to the DNA polymerase type-Y family. In terms of assembly, monomer. Mg(2+) serves as cofactor.

Its subcellular location is the cytoplasm. It carries out the reaction DNA(n) + a 2'-deoxyribonucleoside 5'-triphosphate = DNA(n+1) + diphosphate. Its function is as follows. Poorly processive, error-prone DNA polymerase involved in untargeted mutagenesis. Copies undamaged DNA at stalled replication forks, which arise in vivo from mismatched or misaligned primer ends. These misaligned primers can be extended by PolIV. Exhibits no 3'-5' exonuclease (proofreading) activity. May be involved in translesional synthesis, in conjunction with the beta clamp from PolIII. The protein is DNA polymerase IV of Escherichia coli O139:H28 (strain E24377A / ETEC).